Consider the following 238-residue polypeptide: uncharacterized protein (238 aa).

The Response regulatory domain occupies Arg-3–Ser-116. A 4-aspartylphosphate modification is found at Asp-54. The HTH LytTR-type domain occupies Ile-136 to Ile-237.

This is an uncharacterized protein from Yersinia pestis.